A 96-amino-acid chain; its full sequence is Large ribosomal subunit protein uL23 (96 aa).

Belongs to the universal ribosomal protein uL23 family. Part of the 50S ribosomal subunit. Contacts protein L29, and trigger factor when it is bound to the ribosome.

In terms of biological role, one of the early assembly proteins it binds 23S rRNA. One of the proteins that surrounds the polypeptide exit tunnel on the outside of the ribosome. Forms the main docking site for trigger factor binding to the ribosome. The sequence is that of Large ribosomal subunit protein uL23 from Nitratidesulfovibrio vulgaris (strain DSM 19637 / Miyazaki F) (Desulfovibrio vulgaris).